Consider the following 237-residue polypeptide: NAD-dependent protein deacylase (237 aa).

The 235-residue stretch at 1–235 (MRIAVLSGAG…PGLLQRLPAL (235 aa)) folds into the Deacetylase sirtuin-type domain. 8-28 (GAGISAESGVPTFRDDKNGLW) is a binding site for NAD(+). Positions 53 and 56 each coordinate substrate. 86–89 (QNVD) contacts NAD(+). Catalysis depends on His-104, which acts as the Proton acceptor. Residues Cys-112, Cys-115, Cys-138, and Cys-140 each contribute to the Zn(2+) site. Residues 177 to 179 (GTS), 203 to 205 (NPE), and Ala-221 contribute to the NAD(+) site.

It belongs to the sirtuin family. Class III subfamily. Zn(2+) is required as a cofactor.

The protein resides in the cytoplasm. The catalysed reaction is N(6)-acetyl-L-lysyl-[protein] + NAD(+) + H2O = 2''-O-acetyl-ADP-D-ribose + nicotinamide + L-lysyl-[protein]. It catalyses the reaction N(6)-succinyl-L-lysyl-[protein] + NAD(+) + H2O = 2''-O-succinyl-ADP-D-ribose + nicotinamide + L-lysyl-[protein]. Its function is as follows. NAD-dependent lysine deacetylase and desuccinylase that specifically removes acetyl and succinyl groups on target proteins. Modulates the activities of several proteins which are inactive in their acylated form. This is NAD-dependent protein deacylase from Mycolicibacterium paratuberculosis (strain ATCC BAA-968 / K-10) (Mycobacterium paratuberculosis).